The following is a 22-amino-acid chain: Zinc metalloproteinase oxiagin (22 aa).

One can recognise a Peptidase M12B domain in the interval 14-22 (CYIEFYVVV).

The protein belongs to the venom metalloproteinase (M12B) family. P-III subfamily. P-IIId sub-subfamily. As to quaternary structure, heterotrimer; disulfide-linked. The heterotrimer consists of 1 metalloproteinase chain and 2 lectin chains. It depends on Zn(2+) as a cofactor. Post-translationally, N-glycosylated. In terms of tissue distribution, expressed by the venom gland.

It localises to the secreted. In terms of biological role, snake venom metalloproteinase that inhibits the classical complement pathway dose-dependently. It acts by binding to carbohydrates of IgG within the antibody-sensitized sheep erythrocytes (EA) complex, and thus prevents interaction of component C2 with immobilized C4b. Also induces cation-independent hemagglutination that can be prevented by D-galactose pretreatment. This chain is Zinc metalloproteinase oxiagin, found in Naja oxiana (Central Asian cobra).